We begin with the raw amino-acid sequence, 340 residues long: Glucokinase (340 aa).

An ATP-binding site is contributed by 17 to 22; the sequence is GDIGGT.

Belongs to the bacterial glucokinase family.

It is found in the cytoplasm. It carries out the reaction D-glucose + ATP = D-glucose 6-phosphate + ADP + H(+). This Agrobacterium fabrum (strain C58 / ATCC 33970) (Agrobacterium tumefaciens (strain C58)) protein is Glucokinase.